The following is a 173-amino-acid chain: MARQNEIEIQTRIGRQRITLDKIIHFPRGLAGFEGRHDFTLLQLREGAPFLVLQSLDDPGLGLLVADPYSFLTDYQIRVGDPEQRLLKLENIRQVAVLVTVSIPAGQPEKTALNLTGPILINHRARIGLQVPQTDASLPPQFYLHMDDANGSTTVRRKASPPAAGEDKGDVQE.

Residues 152–173 (STTVRRKASPPAAGEDKGDVQE) form a disordered region.

This sequence belongs to the FliW family. As to quaternary structure, interacts with translational regulator CsrA and flagellin(s).

It localises to the cytoplasm. Functionally, acts as an anti-CsrA protein, binds CsrA and prevents it from repressing translation of its target genes, one of which is flagellin. Binds to flagellin and participates in the assembly of the flagellum. The sequence is that of Flagellar assembly factor FliW from Nitratidesulfovibrio vulgaris (strain ATCC 29579 / DSM 644 / CCUG 34227 / NCIMB 8303 / VKM B-1760 / Hildenborough) (Desulfovibrio vulgaris).